The chain runs to 358 residues: MAILIKNKVPTTLYQVYDNEGKLIDPNHKITLTDEQLKHAYYLMNLSRMMDKKMLVWQRAGKMLNFAPNLGEEALQVGMGLGLNENDWVCPTFRSGALMLYRGVKPEQLLLYWNGNEKGSQIDAKYKTLPINITIGAQYSHAAGLGYMLHYKKQPNVAVTMIGDGGTAEGEFYEAMNIASIHKWNTVFCINNNQFAISTRTKLESAVSDLSVKAIACGIPRVRVDGNDLIASYEAMQDAANYARGGNGPVLIEFFSYRQGPHTTSDDPSIYRTKQEEEEGMKSDPVKRLRNFLFDRSILNQAQEEEMFSKIEQEIQAAYEKMVLDTPVSVDEVFDYNYQELTPELVEQKQIAKKYFKD.

As to quaternary structure, heterodimer of an alpha and a beta chain. Requires thiamine diphosphate as cofactor.

It carries out the reaction N(6)-[(R)-lipoyl]-L-lysyl-[protein] + pyruvate + H(+) = N(6)-[(R)-S(8)-acetyldihydrolipoyl]-L-lysyl-[protein] + CO2. Its function is as follows. The pyruvate dehydrogenase complex catalyzes the overall conversion of pyruvate to acetyl-CoA and CO(2). It contains multiple copies of three enzymatic components: pyruvate dehydrogenase (E1), dihydrolipoamide acetyltransferase (E2) and lipoamide dehydrogenase (E3). This Mycoplasma genitalium (strain ATCC 33530 / DSM 19775 / NCTC 10195 / G37) (Mycoplasmoides genitalium) protein is Pyruvate dehydrogenase E1 component subunit alpha (pdhA).